Consider the following 223-residue polypeptide: DNA-directed RNA polymerase III subunit RPC7 (223 aa).

Residues 110 to 223 (MMPRNKCKKA…SDDNMDEATY (114 aa)) form a disordered region. Basic residues predominate over residues 114 to 125 (NKCKKAGPKPKK). A Phosphothreonine modification is found at T133. The segment covering 140 to 155 (DVLKKMEELEKRGDGE) has biased composition (basic and acidic residues). The residue at position 157 (S157) is a Phosphoserine. The span at 164 to 173 (KEGSKEKSKE) shows a compositional bias: basic and acidic residues. Acidic residues-rich tracts occupy residues 174 to 198 (GDDD…EEND) and 205 to 223 (EDGD…EATY).

This sequence belongs to the eukaryotic RPC7 RNA polymerase subunit family. As to quaternary structure, component of the RNA polymerase III complex consisting of 17 subunits: a ten-subunit horseshoe-shaped catalytic core composed of POLR3A/RPC1, POLR3B/RPC2, POLR1C/RPAC1, POLR1D/RPAC2, POLR3K/RPC10, POLR2E/RPABC1, POLR2F/RPABC2, POLR2H/RPABC3, POLR2K/RPABC4 and POLR2L/RPABC5; a mobile stalk composed of two subunits POLR3H/RPC8 and CRCP/RPC9, protruding from the core and functioning primarily in transcription initiation; and additional subunits homologous to general transcription factors of the RNA polymerase II machinery, POLR3C/RPC3-POLR3F/RPC6-POLR3G/RPC7 heterotrimer required for transcription initiation and POLR3D/RPC4-POLR3E/RPC5 heterodimer involved in both transcription initiation and termination. Directly interacts with POLR3C/RPC62. Also found in a trimeric complex with POLR3C/RPC3 and POLR3GL. In terms of tissue distribution, barely detectable in differentiated tissues. Expressed in embryonic stem cells and in other dividing cells, such as some tumor cell lines.

It is found in the nucleus. The protein resides in the cytoplasm. Functionally, DNA-dependent RNA polymerase catalyzes the transcription of DNA into RNA using the four ribonucleoside triphosphates as substrates. Specific peripheric component of RNA polymerase III (Pol III) which synthesizes small non-coding RNAs including 5S rRNA, snRNAs, tRNAs and miRNAs from at least 500 distinct genomic loci. Acts as a long tether that bridges POLR3C/RPC3-POLR3F/RPC6-POLR3G/RPC7 heterotrimer and the mobile stalk of Pol III, coordinating the dynamics of Pol III stalk and clamp modules during the transition from apo to elongation state. Pol III exists as two alternative complexes defined by the mutually exclusive incorporation of subunit POLR3G/RPC7alpha or POLR3GL/RPC7beta. POLR3G/RPC7alpha modulates Pol III transcriptome by specifically enhancing the transcription of snaR-A non-coding RNAs. At resting state, occupies the active site of apo Pol III and keeps Pol III in an autoinhibitory mode, preventing non-specific transcription. Pol III plays a key role in sensing and limiting infection by intracellular bacteria and DNA viruses. Acts as a nuclear and cytosolic DNA sensor involved in innate immune response. Can sense non-self dsDNA that serves as template for transcription into dsRNA. The non-self RNA polymerase III transcripts, such as Epstein-Barr virus-encoded RNAs (EBERs), induce type I interferon and NF-kappa-B through the RIG-I pathway. In Homo sapiens (Human), this protein is DNA-directed RNA polymerase III subunit RPC7.